A 630-amino-acid chain; its full sequence is Transferrin-binding protein B (630 aa).

The signal sequence occupies residues 1–17 (MKSVPLITGGLSFLLSA). Residue Cys-18 is the site of N-palmitoyl cysteine attachment. Residue Cys-18 is the site of S-diacylglycerol cysteine attachment. Disordered stretches follow at residues 26–53 (DVDD…KSNL), 280–301 (VTPT…LEGG), and 591–613 (NNPT…SPNA). Over residues 32–50 (NPSSSKPRYQDDTSSSRTK) the composition is skewed to polar residues.

This sequence belongs to the TbpB family.

It is found in the cell outer membrane. Its subcellular location is the cell surface. Functionally, haemophilus acquires iron by extracting it from serum transferrin (TF) in its human host. Acts as a transferrin receptor and is required for transferrin utilization. This chain is Transferrin-binding protein B, found in Haemophilus influenzae (strain 86-028NP).